Consider the following 797-residue polypeptide: Kinesin-like protein Klp68D (797 aa).

In terms of domain architecture, Kinesin motor spans 19–344; it reads CVQVVVRCRP…LRYASRAKSI (326 aa). 106–113 contacts ATP; the sequence is GQTGTGKT. Positions 350 to 384 form a coiled coil; that stretch reads KNEDPQDAKLKEYQEEIERLKRLIAPQQQQRSEKQ. Disordered regions lie at residues 371-450, 610-656, and 722-797; these read RLIA…ELER, SSFP…PSSL, and ANSS…LVNK. Positions 386-396 are enriched in basic residues; sequence TIKKQRVKKPK. Residues 417–431 are compositionally biased toward acidic residues; it reads QVDEDRDSDGDGAES. Basic and acidic residues predominate over residues 432 to 450; the sequence is ESDKENEAEVAKSNEELER. Positions 432–580 form a coiled coil; that stretch reads ESDKENEAEV…LVKELKRQLL (149 aa). Basic residues predominate over residues 626–638; that stretch reads GYRRPVSHPQRRR. The span at 782–791 shows a compositional bias: low complexity; that stretch reads KKPASAYPKA.

This sequence belongs to the TRAFAC class myosin-kinesin ATPase superfamily. Kinesin family. Kinesin II subfamily.

It is found in the cytoplasm. Its subcellular location is the cytoskeleton. Functionally, plus-end directed microtubule motor that may be used for anterograde axonal transport and could conceivably move cargos in fly neurons different than those moved by kinesin heavy chain or other plus-end directed motors. This is Kinesin-like protein Klp68D from Drosophila pseudoobscura pseudoobscura (Fruit fly).